We begin with the raw amino-acid sequence, 82 residues long: Bowman-Birk type proteinase inhibitor (82 aa).

The segment at 1–24 (SGHHDETTDEPSESSKPCCDQCSC) is disordered. Cystine bridges form between C18-C72, C19-C34, C22-C68, C24-C32, C42-C49, C46-C61, and C51-C59.

This sequence belongs to the Bowman-Birk serine protease inhibitor family.

Its function is as follows. Trypsin and chymotrypsin are inhibited simultaneously. There are two separate reactive sites for trypsin and chymotrypsin but they do not inhibit simultaneously. The sequence is that of Bowman-Birk type proteinase inhibitor from Phaseolus angularis (Azuki bean).